The following is a 432-amino-acid chain: Trigger factor (432 aa).

The PPIase FKBP-type domain maps to 161–246 (EDRVTIDFTG…LKKVEERELP (86 aa)).

The protein belongs to the FKBP-type PPIase family. Tig subfamily.

Its subcellular location is the cytoplasm. The enzyme catalyses [protein]-peptidylproline (omega=180) = [protein]-peptidylproline (omega=0). Its function is as follows. Involved in protein export. Acts as a chaperone by maintaining the newly synthesized protein in an open conformation. Functions as a peptidyl-prolyl cis-trans isomerase. This chain is Trigger factor, found in Cronobacter sakazakii (strain ATCC BAA-894) (Enterobacter sakazakii).